Consider the following 378-residue polypeptide: Mevalonate kinase (378 aa).

Residues K10, S138, and 143–149 (GSGLGSS) each bind ATP. The Mg(2+) site is built by S149 and E193. Residue D204 is the Proton acceptor of the active site.

This sequence belongs to the GHMP kinase family. Mevalonate kinase subfamily. The cofactor is Mg(2+).

The protein localises to the cytoplasm. The enzyme catalyses (R)-mevalonate + ATP = (R)-5-phosphomevalonate + ADP + H(+). It participates in isoprenoid biosynthesis; isopentenyl diphosphate biosynthesis via mevalonate pathway; isopentenyl diphosphate from (R)-mevalonate: step 1/3. Its activity is regulated as follows. Its activity is inhibited in vitro by geranyl pyrophosphate (GPP) and farnesyl pyrophosphate (FPP) that bind competitively at the ATP-binding site on the enzyme. Functionally, catalyzes the phosphorylation of mevalonate to mevalonate 5-phosphate, a key step in isoprenoid and cholesterol biosynthesis. The sequence is that of Mevalonate kinase from Arabidopsis thaliana (Mouse-ear cress).